The chain runs to 243 residues: Probable transcriptional regulatory protein BG0025 (243 aa).

Belongs to the TACO1 family.

Its subcellular location is the cytoplasm. The sequence is that of Probable transcriptional regulatory protein BG0025 from Borrelia garinii subsp. bavariensis (strain ATCC BAA-2496 / DSM 23469 / PBi) (Borreliella bavariensis).